Consider the following 282-residue polypeptide: Leucine-rich protein (282 aa).

Functionally, not essential for viability or growth. Nevertheless, uncontrolled production in E.coli is detrimental to the normal physiology of the bacteria. The chain is Leucine-rich protein (lrp) from Streptococcus dysgalactiae subsp. equisimilis (Streptococcus equisimilis).